The primary structure comprises 248 residues: Tryptophan synthase alpha chain (248 aa).

Catalysis depends on proton acceptor residues Glu36 and Asp47.

This sequence belongs to the TrpA family. Tetramer of two alpha and two beta chains.

The catalysed reaction is (1S,2R)-1-C-(indol-3-yl)glycerol 3-phosphate + L-serine = D-glyceraldehyde 3-phosphate + L-tryptophan + H2O. Its pathway is amino-acid biosynthesis; L-tryptophan biosynthesis; L-tryptophan from chorismate: step 5/5. The alpha subunit is responsible for the aldol cleavage of indoleglycerol phosphate to indole and glyceraldehyde 3-phosphate. The sequence is that of Tryptophan synthase alpha chain from Pyrococcus abyssi (strain GE5 / Orsay).